The following is a 550-amino-acid chain: Hydroxylamine reductase (550 aa).

Positions 7, 10, 19, and 25 each coordinate [4Fe-4S] cluster. Residues H244, E268, C312, C405, C433, C458, E493, and K495 each contribute to the hybrid [4Fe-2O-2S] cluster site. Position 405 is a cysteine persulfide (C405).

The protein belongs to the HCP family. It depends on [4Fe-4S] cluster as a cofactor. Hybrid [4Fe-2O-2S] cluster serves as cofactor.

Its subcellular location is the cytoplasm. The catalysed reaction is A + NH4(+) + H2O = hydroxylamine + AH2 + H(+). Its function is as follows. Catalyzes the reduction of hydroxylamine to form NH(3) and H(2)O. This chain is Hydroxylamine reductase, found in Porphyromonas gingivalis (strain ATCC 33277 / DSM 20709 / CIP 103683 / JCM 12257 / NCTC 11834 / 2561).